The following is a 186-amino-acid chain: Elongation factor P (186 aa).

This sequence belongs to the elongation factor P family.

Its subcellular location is the cytoplasm. It functions in the pathway protein biosynthesis; polypeptide chain elongation. Functionally, involved in peptide bond synthesis. Stimulates efficient translation and peptide-bond synthesis on native or reconstituted 70S ribosomes in vitro. Probably functions indirectly by altering the affinity of the ribosome for aminoacyl-tRNA, thus increasing their reactivity as acceptors for peptidyl transferase. The chain is Elongation factor P from Neisseria meningitidis serogroup A / serotype 4A (strain DSM 15465 / Z2491).